The sequence spans 462 residues: Fumarate hydratase class II (462 aa).

Substrate is bound by residues 97 to 99, 127 to 130, 137 to 139, and threonine 185; these read SGT, HPND, and SSN. The active-site Proton donor/acceptor is the histidine 186. Serine 316 is a catalytic residue. Substrate contacts are provided by residues serine 317 and 322–324; that span reads KVN.

The protein belongs to the class-II fumarase/aspartase family. Fumarase subfamily. As to quaternary structure, homotetramer.

It is found in the cytoplasm. It carries out the reaction (S)-malate = fumarate + H2O. Its pathway is carbohydrate metabolism; tricarboxylic acid cycle; (S)-malate from fumarate: step 1/1. Functionally, involved in the TCA cycle. Catalyzes the stereospecific interconversion of fumarate to L-malate. In Bacillus anthracis, this protein is Fumarate hydratase class II.